The chain runs to 1068 residues: TSC22 domain family protein 1 (1068 aa).

The tract at residues 1 to 98 is required for interaction with TGFBR1 and promotion of TGF-beta signaling; the sequence is MHQPPESTAA…SQAQLQAQPL (98 aa). Disordered stretches follow at residues 23 to 110, 125 to 288, and 602 to 623; these read AHPA…KKSG, ISSN…SPAS, and YSQA…QQLQ. Low complexity predominate over residues 36–55; it reads GSASALNAAGTGVGSSATSS. A compositionally biased stretch (pro residues) spans 58-70; it reads FPPPSLLQPPPPA. A compositionally biased stretch (low complexity) spans 84 to 100; it reads SLNLLSQAQLQAQPLAP. Acidic residues predominate over residues 133–142; the sequence is EDTESYDDLD. Basic residues predominate over residues 216 to 240; it reads HPHHLHHHHHIHHGHHLQHGHHHPS. Over residues 241 to 250 the composition is skewed to low complexity; it reads HVAVASASIP. Residues 261–271 show a composition bias toward polar residues; that stretch reads KLSTTGSSDSI. Phosphoserine is present on Ser-263. Positions 272–288 are enriched in low complexity; that stretch reads TPVAPTSAVSSSGSPAS. Residues 609 to 620 are compositionally biased toward pro residues; it reads VQTPLPGAPPPQ. The interval 1000–1021 is leucine-zipper; sequence VLKEQIKELIEKNSQLEQENNL. The segment at 1032–1068 is disordered; the sequence is AQFQAQLQTGSPPATTQPQGTTQPPAQPASQGSGPTA. Residues 1039–1068 are compositionally biased toward low complexity; the sequence is QTGSPPATTQPQGTTQPPAQPASQGSGPTA.

The protein belongs to the TSC-22/Dip/Bun family. As to quaternary structure, forms homodimers. Forms heterodimers. Component of a complex composed of TSC22D1 (via N-terminus), TGFBR1 and TGFBR2; the interaction between TSC22D1 and TGFBR1 is inhibited by SMAD7 and promoted by TGFB1. Interacts with SMAD7; the interaction requires TGF-beta and the interaction is inhibited by TGFBR1. Interacts with TPT1/fortilin; interaction results in the destabilization of TSC22D1 protein and prevents TSC22D1-mediated apoptosis. Interacts with SMAD4 (via N-terminus). Interacts with ACVRL1/ALK1, ACVR1/ALK2, BMPR1A/ALK3, ACVR1B/ALK4, BMPR1B/ALK6, ACVR2A/ACTRII, and BMPR2. Interacts with SMAD6. Interacts with TFE3; the interaction is enhanced in the presence of TGF-beta. Forms a heterodimer with TSC22D4/THG1. In terms of assembly, forms a heterodimer with TSC22D4/THG1. Interacts with histone H1-2. Interacts with GNL3.

It localises to the cytoplasm. Its subcellular location is the nucleus. The protein localises to the cell membrane. It is found in the mitochondrion. Functionally, transcriptional repressor. Acts on the C-type natriuretic peptide (CNP) promoter. Acts to promote CASP3-mediated apoptosis. Positively regulates TGF-beta signaling by interacting with SMAD7 which inhibits binding of SMAD7 to TGFBR1, preventing recruitment of SMURF ubiquitin ligases to TGFBR1 and inhibiting SMURF-mediated ubiquitination and degradation of TGFBR1. Contributes to enhancement of TGF-beta signaling by binding to and modulating the transcription activator activity of SMAD4. Promotes TGF-beta-induced transcription of COL1A2; via its interaction with TFE3 at E-boxes in the gene proximal promoter. Plays a role in the repression of hematopoietic precursor cell growth. Promotes IL2 deprivation-induced apoptosis in T-lymphocytes, via repression of TSC22D3/GILZ transcription and activation of the caspase cascade. May act to negatively regulate TGFB3 signaling and thereby inhibit cell death in mammary gland cells. Its function is as follows. Positively regulates cell death in response to TGFB3 during mammary gland involution. The protein is TSC22 domain family protein 1 of Macaca fascicularis (Crab-eating macaque).